Here is a 245-residue protein sequence, read N- to C-terminus: MTFLLSRTFISLTLRPSCSISMANLTTNAKTRLRGVVFDMDGTLTVPVIDFAAMYRAVLGEDAYKRIKAESPSGIDILHHIESWSPDKQQKAYEIIADYEKQGIDKLQIMPGTAELCGFLDSKKIKRGLITRNVQKAIDIFHQRFEVIFSPALGREFRPYKPNPDPLLHICSTWDIQPNEVMMVGDSLKDDIACGKRAGAFTCLLDETGRYGPDDFSVSGLQPDFKVDSLSKIQNLLETNFDLNP.

Thr2 is subject to N-acetylalanine. Residue Asp39 is the Nucleophile of the active site. 3 residues coordinate Mg(2+): Asp39, Asp41, and Asp186. The Proton donor role is filled by Asp41.

This sequence belongs to the HAD-like hydrolase superfamily. DOG/GPP family. Mg(2+) is required as a cofactor.

The polypeptide is Haloacid dehalogenase-like hydrolase domain-containing protein At2g33255 (Arabidopsis thaliana (Mouse-ear cress)).